The chain runs to 262 residues: Putative glycyl-radical enzyme activating enzyme HI_0520 (262 aa).

Positions 20-262 (VEGQGNRSSI…CGINKILTIL (243 aa)) constitute a Radical SAM core domain. Residues C34, C38, and C41 each contribute to the [4Fe-4S] cluster site. Residues 40 to 42 (YCH), G81, and 130 to 132 (DLK) each bind S-adenosyl-L-methionine.

The protein belongs to the organic radical-activating enzymes family. [4Fe-4S] cluster is required as a cofactor.

The enzyme catalyses glycyl-[protein] + reduced [flavodoxin] + S-adenosyl-L-methionine = glycin-2-yl radical-[protein] + semiquinone [flavodoxin] + 5'-deoxyadenosine + L-methionine + H(+). The sequence is that of Putative glycyl-radical enzyme activating enzyme HI_0520 from Haemophilus influenzae (strain ATCC 51907 / DSM 11121 / KW20 / Rd).